We begin with the raw amino-acid sequence, 553 residues long: Membrane protein insertase YidC (553 aa).

5 consecutive transmembrane segments (helical) span residues 7–24 (VLWV…DNWQ), 365–385 (WGWA…PLSA), 435–455 (LPVV…LASV), 474–494 (PYFI…SLNP), and 509–529 (PIAF…YYVV).

Belongs to the OXA1/ALB3/YidC family. Type 1 subfamily. Interacts with the Sec translocase complex via SecD. Specifically interacts with transmembrane segments of nascent integral membrane proteins during membrane integration.

It is found in the cell inner membrane. Required for the insertion and/or proper folding and/or complex formation of integral membrane proteins into the membrane. Involved in integration of membrane proteins that insert both dependently and independently of the Sec translocase complex, as well as at least some lipoproteins. Aids folding of multispanning membrane proteins. The polypeptide is Membrane protein insertase YidC (Burkholderia multivorans (strain ATCC 17616 / 249)).